A 488-amino-acid polypeptide reads, in one-letter code: Protein nucleotidyltransferase YdiU (488 aa).

ATP is bound by residues G91, G93, R94, K114, D126, G127, R177, and R184. The active-site Proton acceptor is D253. Residues N254 and D263 each contribute to the Mg(2+) site. D263 contacts ATP.

This sequence belongs to the SELO family. Requires Mg(2+) as cofactor. It depends on Mn(2+) as a cofactor.

The enzyme catalyses L-seryl-[protein] + ATP = 3-O-(5'-adenylyl)-L-seryl-[protein] + diphosphate. It catalyses the reaction L-threonyl-[protein] + ATP = 3-O-(5'-adenylyl)-L-threonyl-[protein] + diphosphate. It carries out the reaction L-tyrosyl-[protein] + ATP = O-(5'-adenylyl)-L-tyrosyl-[protein] + diphosphate. The catalysed reaction is L-histidyl-[protein] + UTP = N(tele)-(5'-uridylyl)-L-histidyl-[protein] + diphosphate. The enzyme catalyses L-seryl-[protein] + UTP = O-(5'-uridylyl)-L-seryl-[protein] + diphosphate. It catalyses the reaction L-tyrosyl-[protein] + UTP = O-(5'-uridylyl)-L-tyrosyl-[protein] + diphosphate. In terms of biological role, nucleotidyltransferase involved in the post-translational modification of proteins. It can catalyze the addition of adenosine monophosphate (AMP) or uridine monophosphate (UMP) to a protein, resulting in modifications known as AMPylation and UMPylation. This chain is Protein nucleotidyltransferase YdiU, found in Bacillus mycoides (strain KBAB4) (Bacillus weihenstephanensis).